Here is a 648-residue protein sequence, read N- to C-terminus: FAD-binding monooxygenase trt3 (648 aa).

Residues 118-121 (TWYW), 130-131 (DI), and Y136 contribute to the FAD site. 128 to 130 (MCD) serves as a coordination point for NADP(+). Residues 274–280 (TGSTAVQ) and 297–298 (RT) each bind NADP(+).

This sequence belongs to the FAD-binding monooxygenase family. Requires FAD as cofactor.

It participates in secondary metabolite biosynthesis; terpenoid biosynthesis. Functionally, FAD-binding monooxygenase; part of the gene cluster that mediates the biosynthesis of terretonin, a fungal meroterpenoid that acts as a mycotoxin. The first step of the pathway is the synthesis of 3,5-dimethylorsellinic acid (DMOA) by the polyketide synthase trt4. DMOA is then prenylated into farnesyl-DMOA by the polyprenyl transferase trt2. Methylation by the methyltransferase trt5 then leads to farnesyl-DMOA methyl ester which is further subject to epoxidation by the FAD-dependent monooxygenase trt8 to yield epoxyfarnesyl-DMOA methyl ester. Cyclization of epoxyfarnesyl-DMOA methyl ester by the terpene cyclase trt1 leads to a tetracycle intermediate which is in turn converted to preterretonin. Dehydrogenase trt9 comes next to transform preterretonin to preterrenoid. The FAD-dependent monooxygenase trt3 is then required for the C-hydroxylation at C16 of preterrenoid to yield terrenoid. The cytochrome P450 trt6 catalyzes three successive oxidations to transform terrenoid into an unstable intermediate, which then undergoes the D-ring expansion and unusual rearrangement of the methoxy group to afford the core skeleton of terretonin. Trt14 catalyzes the D-ring expansion of terretonin involving intramolecular methoxy rearrangement as well as the hydrolysis of the expanded D-ring and the methyl ester moiety. Finally, the nonheme iron-dependent dioxygenase trt7 accomplishes the last two oxidation reactions steps to complete the biosynthesis of terretonin. Terretonin C is produced via spontaneous decarboxylation of the terretonin precursor. Another shunt product of the terretonin biosynthesis is dihydrofarnesyl-DMOA, derived from epoxyfarnesyl-DMOA through hydrolysis of the epoxide. The chain is FAD-binding monooxygenase trt3 from Aspergillus terreus (strain NIH 2624 / FGSC A1156).